The following is a 541-amino-acid chain: Chaperonin GroEL 1 (541 aa).

ATP contacts are provided by residues 29-32, 86-90, G415, 479-481, and D495; these read TIGP, DGTTT, and NAA.

It belongs to the chaperonin (HSP60) family. As to quaternary structure, forms a cylinder of 14 subunits composed of two heptameric rings stacked back-to-back. Interacts with the co-chaperonin GroES.

It is found in the cytoplasm. The enzyme catalyses ATP + H2O + a folded polypeptide = ADP + phosphate + an unfolded polypeptide.. Functionally, together with its co-chaperonin GroES, plays an essential role in assisting protein folding. The GroEL-GroES system forms a nano-cage that allows encapsulation of the non-native substrate proteins and provides a physical environment optimized to promote and accelerate protein folding. The chain is Chaperonin GroEL 1 from Streptomyces coelicolor (strain ATCC BAA-471 / A3(2) / M145).